A 497-amino-acid chain; its full sequence is Reticulophagy regulator 1 (497 aa).

Residues 1–51 are disordered; the sequence is MASPAPPEHAEEGCPAPAAEEQAPPSPPPPQASPAERQQQEEEAQEAGAAE. The Cytoplasmic segment spans residues 1 to 59; the sequence is MASPAPPEHAEEGCPAPAAEEQAPPSPPPPQASPAERQQQEEEAQEAGAAEGAGLQVEE. A compositionally biased stretch (low complexity) spans 13–23; the sequence is GCPAPAAEEQA. The chain crosses the membrane as a helical span at residues 60–80; it reads AAGRAAAAVTWLLGEPVLWLG. Residues 81-95 lie on the Lumenal side of the membrane; it reads CRADELLSWKRPLRS. A reticulon homology domain region spans residues 84–233; the sequence is DELLSWKRPL…LLCAFLCPLF (150 aa). A helical membrane pass occupies residues 96–116; it reads LLGFVAANLLFWFLALTPWRV. At 117 to 118 the chain is on the cytoplasmic side; the sequence is YH. The helical transmembrane segment at 119–139 threads the bilayer; the sequence is LISVMILGRVIMQIIKDMVLS. The Lumenal portion of the chain corresponds to 140–208; that stretch reads RTRGAQLWRS…LVCSVCTFFT (69 aa). Phosphoserine is present on S149. At S151 the chain carries Phosphoserine; by CAMK2B. At S153 the chain carries Phosphoserine. The chain crosses the membrane as a helical span at residues 209 to 229; it reads ILGSYIPGVILSYLLLLCAFL. The Cytoplasmic portion of the chain corresponds to 230–497; the sequence is CPLFKCNDIG…GFLSNLLGGH (268 aa). Residues 319–330 are compositionally biased toward polar residues; sequence FNLSEGYTPQTD. 4 disordered regions span residues 319–365, 377–396, 436–455, and 468–497; these read FNLS…EDEL, KEQL…AAGL, LSQA…GDDF, and SELG…LGGH. Composition is skewed to basic and acidic residues over residues 334–348 and 377–388; these read DLDR…RDLS and KEQLDSGHRPSK. Acidic residues predominate over residues 443 to 455; the sequence is PEEDTDTEEGDDF. The short motif at 453–458 is the LIR motif element; sequence DDFELL. Polar residues predominate over residues 471–490; the sequence is GLTQDQEAEAQQNKKSSGFL.

The protein belongs to the RETREG family. In terms of assembly, homooligomer; oligomerization is enhanced following endoplasmic reticulum stress and is mediated by the reticulon homology domain. Interacts with ATG8 family modifier proteins MAP1LC3A, MAP1LC3B, MAP1LC3C, GABARAP, GABARAPL1 and GABARAPL2. Shows higher affinity for GABARAPL1 than for MAP1LC3A or MAP1LC3B. Post-translationally, phosphorylation at Ser-151 by CAMK2B enhances oligomerization and membrane scission and reticulophagy activity. Overexpressed in esophageal squamous cell carcinoma.

The protein localises to the golgi apparatus. Its subcellular location is the cis-Golgi network membrane. The protein resides in the endoplasmic reticulum membrane. Its function is as follows. Endoplasmic reticulum (ER)-anchored autophagy regulator which mediates ER delivery into lysosomes through sequestration into autophagosomes. Promotes membrane remodeling and ER scission via its membrane bending capacity and targets the fragments into autophagosomes via interaction with ATG8 family proteins. Active under basal conditions. Required for collagen quality control in a LIR motif-dependent manner. Required for long-term survival of nociceptive and autonomic ganglion neurons. (Microbial infection) During SARS-CoV-2 infection, RETREG1-mediated reticulophagy is promoted by SARS-CoV-2 ORF3A protein. This induces endoplasmic reticulum stress and inflammatory responses and facilitates viral infection. The sequence is that of Reticulophagy regulator 1 from Homo sapiens (Human).